A 258-amino-acid chain; its full sequence is Tryptophan synthase alpha chain (258 aa).

Active-site proton acceptor residues include E47 and D58.

This sequence belongs to the TrpA family. In terms of assembly, tetramer of two alpha and two beta chains.

The catalysed reaction is (1S,2R)-1-C-(indol-3-yl)glycerol 3-phosphate + L-serine = D-glyceraldehyde 3-phosphate + L-tryptophan + H2O. Its pathway is amino-acid biosynthesis; L-tryptophan biosynthesis; L-tryptophan from chorismate: step 5/5. In terms of biological role, the alpha subunit is responsible for the aldol cleavage of indoleglycerol phosphate to indole and glyceraldehyde 3-phosphate. This chain is Tryptophan synthase alpha chain, found in Bacillus thuringiensis (strain Al Hakam).